The following is a 699-amino-acid chain: MNPSEMQRKAPPRRRRHRNRAPLTHKMNKMVTSEEQMKLPSTKKAEPPTWAQLKKLTQLATKYLENTKVTQTPESMLLAALMIVSMVVSLPMPAGAAAANYTYWAYVPFPPLIRAVTWMDNPIEVYVNDSVWVPGPTDDHCPAKPEEEGMMINISIGYRYPPICLGRAPGCLMPAVQNWLVEVPTVSPISRFTYHMVSGMSLRPRVNYLQDFSYQRSFKFRPKGKPCPKEIPKESKNTEVLVWEECVANSAVILQNNEFGTIIDWAPRGQFYHNCSGQTQSCPSAQVSPAVDSDLTESLDKHKHKKLQSFYPWEWGEKGISTPRPKIISPVSGPEHPELWRLTVASHHIRIWSGNQTLETRDRKPFYTVDLNSSVTVPLQSCIKPPYMLVVGNIVIKPDSQTITCENCRLLTCIDSTFNWQHRILLVRAREGVWIPVSMDRPWETSPSIHTLTEVLKGVLNRSKRFIFTLIAVIMGLIAVTATAAVAGVALHSSVQSVNFVNDWQKNSTRLWNSQSSIDQKLANQINDLRQTVIWMGDRLMSLEHRFQLQCDWNTSDFSITPQIYNESEHHWDMVRRHLQGREDNLTLDISKLKEQIFEASKAHLNLVPGTEAIAGVADGLANLNPVTWVKTIGSTTIINLILILVCLFCLLLVCRCTQQLRRDSDHRERAMMTMAVLSKRKGGNVGKSKRDQIVTVSV.

Residues 1–47 are disordered; the sequence is MNPSEMQRKAPPRRRRHRNRAPLTHKMNKMVTSEEQMKLPSTKKAEP. The signal sequence occupies residues 1–89; that stretch reads MNPSEMQRKA…ALMIVSMVVS (89 aa). Basic residues predominate over residues 10–20; the sequence is APPRRRRHRNR. The Extracellular portion of the chain corresponds to 90–632; that stretch reads LPMPAGAAAA…NLNPVTWVKT (543 aa). Asn100, Asn128, Asn153, Asn274, Asn355, Asn372, and Asn461 each carry an N-linked (GlcNAc...) asparagine glycan. Residues 466–486 form a fusion peptide region; sequence FIFTLIAVIMGLIAVTATAAV. N-linked (GlcNAc...) asparagine glycans are attached at residues Asn507, Asn554, Asn566, and Asn585. The helical transmembrane segment at 633-653 threads the bilayer; it reads IGSTTIINLILILVCLFCLLL. Over 654-699 the chain is Cytoplasmic; it reads VCRCTQQLRRDSDHRERAMMTMAVLSKRKGGNVGKSKRDQIVTVSV.

This sequence belongs to the beta type-B retroviral envelope protein family. HERV class-II K(HML-2) env subfamily. The surface (SU) and transmembrane (TM) proteins form a heterodimer. SU and TM are attached by noncovalent interactions or by a labile interchain disulfide bond. In terms of processing, specific enzymatic cleavages in vivo yield the mature SU and TM proteins.

The protein localises to the cell membrane. It localises to the virion. Its function is as follows. Retroviral envelope proteins mediate receptor recognition and membrane fusion during early infection. Endogenous envelope proteins may have kept, lost or modified their original function during evolution. This endogenous envelope protein has lost its original fusogenic properties. SU mediates receptor recognition. Functionally, TM anchors the envelope heterodimer to the viral membrane through one transmembrane domain. The other hydrophobic domain, called fusion peptide, mediates fusion of the viral membrane with the target cell membrane. The sequence is that of Endogenous retrovirus group K member 19 Env polyprotein (ERVK-19) from Homo sapiens (Human).